Reading from the N-terminus, the 326-residue chain is Peroxidase 46 (326 aa).

Residues 1–27 (MASSYRINCSTLLHLLMFLSSLLTSSA) form the signal peptide. Residue N28 is glycosylated (N-linked (GlcNAc...) asparagine). Intrachain disulfides connect C38/C114, C71/C76, C120/C322, and C199/C233. H69 (proton acceptor) is an active-site residue. Ca(2+)-binding residues include D70, V73, G75, D77, and S79. The N-linked (GlcNAc...) asparagine glycan is linked to N85. H192 is a binding site for heme b. T193 provides a ligand contact to Ca(2+). Ca(2+) is bound by residues D246, T249, and D254. An N-linked (GlcNAc...) asparagine glycan is attached at N278.

Belongs to the peroxidase family. Classical plant (class III) peroxidase subfamily. Requires heme b as cofactor. The cofactor is Ca(2+).

It localises to the secreted. It catalyses the reaction 2 a phenolic donor + H2O2 = 2 a phenolic radical donor + 2 H2O. Functionally, removal of H(2)O(2), oxidation of toxic reductants, biosynthesis and degradation of lignin, suberization, auxin catabolism, response to environmental stresses such as wounding, pathogen attack and oxidative stress. These functions might be dependent on each isozyme/isoform in each plant tissue. The protein is Peroxidase 46 (PER46) of Arabidopsis thaliana (Mouse-ear cress).